A 62-amino-acid polypeptide reads, in one-letter code: Small ribosomal subunit protein eS27 (62 aa).

Residues cysteine 17, cysteine 20, cysteine 36, and cysteine 39 each coordinate Zn(2+). A C4-type zinc finger spans residues 17–39 (CNDCENEQIIFGSASRKITCVVC).

Belongs to the eukaryotic ribosomal protein eS27 family. Part of the 30S ribosomal subunit. Requires Zn(2+) as cofactor.

The chain is Small ribosomal subunit protein eS27 from Methanosarcina mazei (strain ATCC BAA-159 / DSM 3647 / Goe1 / Go1 / JCM 11833 / OCM 88) (Methanosarcina frisia).